We begin with the raw amino-acid sequence, 374 residues long: Mannitol-1-phosphate 5-dehydrogenase (374 aa).

Ala-3–Gly-14 is a binding site for NAD(+).

This sequence belongs to the mannitol dehydrogenase family.

It carries out the reaction D-mannitol 1-phosphate + NAD(+) = beta-D-fructose 6-phosphate + NADH + H(+). The polypeptide is Mannitol-1-phosphate 5-dehydrogenase (Shouchella clausii (strain KSM-K16) (Alkalihalobacillus clausii)).